The primary structure comprises 275 residues: Autophagy protein 5 (275 aa).

M1 is subject to N-acetylmethionine. K130 participates in a covalent cross-link: Glycyl lysine isopeptide (Lys-Gly) (interchain with G-Cter in ATG12).

This sequence belongs to the ATG5 family. In terms of assembly, forms a conjugate with ATG12. Part of the minor complex composed of 4 sets of ATG12-ATG5 and ATG16L1 (400 kDa); this complex interacts with ATG3 leading to disruption of ATG7 interaction and promotion of ATG8-like proteins lipidation. Forms an 800-kDa complex composed of ATG12-ATG5 and ATG16L2. The ATG12-ATG5 conjugate interacts with RAB33A; this interaction is bridged by ATG16L1 and promotes ATG12-ATG5-ATG16L1 complex recruitment to phagophores. Interacts with TECPR1; the interaction is direct and does not take place when ATG16L1 is associated with the ATG5-ATG12 conjugate. Interacts with DHX58/RIG-1, IFIH1/MDA5 and MAVS/IPS-1 in monomeric form as well as in ATG12-ATG5 conjugate form. The interaction with MAVS is further enhanced upon vesicular stomatitis virus (VSV) infection. Interacts with ATG3. Interacts with ATG7 and ATG10. Interacts with FADD. Interacts with Bassoon/BSN; this interaction is important for the regulation of presynaptic autophagy. Interacts with ATG16L2. Post-translationally, conjugated to ATG12; which is essential for autophagy, but is not required for association with isolation membrane. Acetylated by EP300. In terms of tissue distribution, ubiquitous.

It localises to the cytoplasm. Its subcellular location is the preautophagosomal structure membrane. In terms of biological role, involved in autophagic vesicle formation. Conjugation with ATG12, through a ubiquitin-like conjugating system involving ATG7 as an E1-like activating enzyme and ATG10 as an E2-like conjugating enzyme, is essential for its function. The ATG12-ATG5 conjugate acts as an E3-like enzyme which is required for lipidation of ATG8 family proteins and their association to the vesicle membranes. Involved in mitochondrial quality control after oxidative damage, and in subsequent cellular longevity. Plays a critical role in multiple aspects of lymphocyte development and is essential for both B and T lymphocyte survival and proliferation. Required for optimal processing and presentation of antigens for MHC II. Involved in the maintenance of axon morphology and membrane structures, as well as in normal adipocyte differentiation. Promotes primary ciliogenesis through removal of OFD1 from centriolar satellites and degradation of IFT20 via the autophagic pathway. As part of the ATG8 conjugation system with ATG12 and ATG16L1, required for recruitment of LRRK2 to stressed lysosomes and induction of LRRK2 kinase activity in response to lysosomal stress. Its function is as follows. May play an important role in the apoptotic process, possibly within the modified cytoskeleton. Its expression is a relatively late event in the apoptotic process, occurring downstream of caspase activity. Plays a crucial role in IFN-gamma-induced autophagic cell death by interacting with FADD. Functionally, (Microbial infection) May act as a proviral factor. In association with ATG12, negatively regulates the innate antiviral immune response by impairing the type I IFN production pathway upon vesicular stomatitis virus (VSV) infection. This chain is Autophagy protein 5, found in Mus musculus (Mouse).